We begin with the raw amino-acid sequence, 430 residues long: 3-phosphoshikimate 1-carboxyvinyltransferase (430 aa).

A disordered region spans residues 1–20 (MHATVSPSRVRGRARAPPSK). 3-phosphoshikimate contacts are provided by K20, S21, and R25. Residue K20 participates in phosphoenolpyruvate binding. G91 and R119 together coordinate phosphoenolpyruvate. Positions 164, 165, 166, 192, 312, and 339 each coordinate 3-phosphoshikimate. Q166 contributes to the phosphoenolpyruvate binding site. Catalysis depends on D312, which acts as the Proton acceptor. Phosphoenolpyruvate-binding residues include R343 and R386.

The protein belongs to the EPSP synthase family. In terms of assembly, monomer.

Its subcellular location is the cytoplasm. The catalysed reaction is 3-phosphoshikimate + phosphoenolpyruvate = 5-O-(1-carboxyvinyl)-3-phosphoshikimate + phosphate. It functions in the pathway metabolic intermediate biosynthesis; chorismate biosynthesis. In terms of biological role, catalyzes the transfer of the enolpyruvyl moiety of phosphoenolpyruvate (PEP) to the 5-hydroxyl of shikimate-3-phosphate (S3P) to produce enolpyruvyl shikimate-3-phosphate and inorganic phosphate. This chain is 3-phosphoshikimate 1-carboxyvinyltransferase, found in Halobacterium salinarum (strain ATCC 29341 / DSM 671 / R1).